The sequence spans 1029 residues: Protein phosphatase 1 regulatory subunit 12A (1029 aa).

The KVKF motif signature appears at 35-38; it reads KVKF. ANK repeat units follow at residues 39 to 68, 72 to 101, 105 to 134, 138 to 164, 198 to 227, and 231 to 260; these read DDGAVFLAACSSGDTDEVLKLLHRGADINY, DGLTALHQACIDDNVDMVKFLVENGANINQ, EGWIPLHAAASCGYLDIAEFLIGQGAHVGA, EGDTPLDIAEEEAMEELLQNEVNRQGV, SGGTALHVAAAKGYTEVLKLLIQAGYDVNI, and DGWTPLHAAAHWGKEEACRILVDNLCDMET. (3S)-3-hydroxyasparagine; by HIF1AN occurs at positions 67 and 100. Residue N226 is modified to (3S)-3-hydroxyasparagine; by HIF1AN. A disordered region spans residues 290–786; it reads LHSEKRDKKS…APSSSSLSTL (497 aa). Basic and acidic residues predominate over residues 291 to 300; it reads HSEKRDKKSP. S299 bears the Phosphoserine mark. Polar residues predominate over residues 302-314; that stretch reads IESTANMENNQPQ. The span at 318–353 shows a compositional bias: basic and acidic residues; that stretch reads KNKETLIIEPEKNASRIESLEHEKADEEEEGKKDES. Acidic residues predominate over residues 357–369; it reads SEEDEEDDSESEA. Over residues 385–402 the composition is skewed to low complexity; sequence TSSTQAAPAAVTAPTLSS. 2 positions are modified to phosphoserine: S422 and S432. The span at 422-432 shows a compositional bias: basic and acidic residues; it reads SPKEEERKDES. The residue at position 443 (T443) is a Phosphothreonine. A Phosphoserine; by NUAK1 modification is found at S445. Position 446 is a phosphotyrosine (Y446). Over residues 469–480 the composition is skewed to low complexity; that stretch reads RSASSPRLSSSL. S472 carries the post-translational modification Phosphoserine; by NUAK1. Position 473 is a phosphoserine; by CDK1 (S473). S477 is subject to Phosphoserine. Over residues 481-491 the composition is skewed to basic and acidic residues; the sequence is DNKEKEKDNKG. 2 positions are modified to phosphoserine: S507 and S509. The segment covering 540 to 551 has biased composition (polar residues); sequence NSSINEGSTYHR. The span at 564–578 shows a compositional bias: low complexity; it reads SCSVPSTTSTPTVTS. Polar residues predominate over residues 585-594; the sequence is SLPSSTSTAA. A compositionally biased stretch (low complexity) spans 596 to 610; sequence TPPGSSSAGTQSSTS. S601 and S618 each carry phosphoserine. Basic and acidic residues predominate over residues 614–625; sequence WAEDSTEKEKDS. Over residues 626 to 656 the composition is skewed to low complexity; the sequence is APTAVTIPVAPTVVNAAAPSTTTLTTTTAGT. Residues 671 to 680 show a composition bias toward basic and acidic residues; sequence VRDEESESQR. The interaction with ROCK2 stretch occupies residues 680 to 863; the sequence is RKARSRQARQ…VSFWTQDSDE (184 aa). Residues 681–691 show a composition bias toward basic residues; sequence KARSRQARQSR. Phosphoserine; by PKA and PKG; in vitro occurs at positions 690 and 693. At T694 the chain carries Phosphothreonine; by ROCK1, ROCK2, CDC42BP, ZIPK/DAPK3 and RAF1. Over residues 716–765 the composition is skewed to basic and acidic residues; that stretch reads RTREQENEEKEKEEKEKQDKEKQEEKKESEASREDEYKQKYSRTYDETYT. The span at 771 to 786 shows a compositional bias: low complexity; it reads STSSSSAPSSSSLSTL. S801 is modified (phosphoserine). The interval 808-927 is disordered; it reads AYSRGLAKEN…PYSSRLEKDD (120 aa). Basic and acidic residues predominate over residues 813–839; sequence LAKENEREGEKKEEEKEGEDKSQPKSI. Positions 840–851 are enriched in basic residues; the sequence is RERRRPREKRRS. Phosphoserine; by ROCK2 is present on S851. S861 and S870 each carry phosphoserine. Positions 866–882 are enriched in basic and acidic residues; sequence QERQSDTEDGSSKRETQ. Over residues 883–897 the composition is skewed to low complexity; it reads TDSVSRYDSSSTSSS. Phosphoserine is present on residues S902 and S907. Phosphoserine; by NUAK1 is present on S909. A compositionally biased stretch (basic and acidic residues) spans 913–927; the sequence is LEDRKPYSSRLEKDD. Position 994 is a phosphoserine (S994).

PP1 comprises a catalytic subunit, PPP1CA, PPP1CB or PPP1CC, and one or several targeting or regulatory subunits. PPP1R12A mediates binding to myosin. Interacts with ARHA and CIT. Binds PPP1R12B, ROCK1 and IL16. Interacts directly with PRKG1. Non-covalent dimer of 2 dimers; PRKG1-PRKG1 and PPP1R12A-PPP1R12A. Interacts with SMTNL1. Interacts with PPP1CB; the interaction is direct. Interacts (when phosphorylated at Ser-445, Ser-472 and Ser-910) with 14-3-3. Interacts with ROCK1 and ROCK2. Interacts with isoform 1 and isoform 2 of ZIPK/DAPK3. Interacts with RAF1. Interacts with HIF1AN. Interacts with NCKAP1L. In terms of processing, phosphorylated by CIT (Rho-associated kinase). Phosphorylated cooperatively by ROCK1 and CDC42BP on Thr-694. Phosphorylated on upon DNA damage, probably by ATM or ATR. In vitro, phosphorylation of Ser-693 by PKA and PKG appears to prevent phosphorylation of the inhibitory site Thr-694, probably mediated by PRKG1. Phosphorylation at Ser-445, Ser-472 and Ser-909 by NUAK1 promotes interaction with 14-3-3, leading to inhibit interaction with myosin light chain MLC2, preventing dephosphorylation of MLC2. May be phosphorylated at Thr-694 by DMPK; may inhibit the myosin phosphatase activity. Phosphorylated at Ser-473 by CDK1 during mitosis, creating docking sites for the POLO box domains of PLK1. Subsequently, PLK1 binds and phosphorylates PPP1R12A. Expressed in striated and vascular smooth muscle, specificcally in type 2a fibers (at protein level). Expression levels are 20-30% higher in developed males than females (at protein level).

It localises to the cytoplasm. The protein localises to the cytoskeleton. The protein resides in the stress fiber. Functionally, key regulator of protein phosphatase 1C (PPP1C). Mediates binding to myosin. As part of the PPP1C complex, involved in dephosphorylation of PLK1. Capable of inhibiting HIF1AN-dependent suppression of HIF1A activity. The chain is Protein phosphatase 1 regulatory subunit 12A from Mus musculus (Mouse).